The primary structure comprises 783 residues: BMP/retinoic acid-inducible neural-specific protein 2 (783 aa).

The N-terminal stretch at 1–33 (MRWQCGTRFRGLRPAVAPWTALLALGLPGWVLA) is a signal peptide. Positions 85 to 281 (RYRIYREFAR…FVAAALSYIT (197 aa)) constitute an MACPF domain. N185, N354, N473, N579, N626, and N658 each carry an N-linked (GlcNAc...) asparagine glycan.

The protein belongs to the BRINP family.

The protein resides in the secreted. Inhibits neuronal cell proliferation by negative regulation of the cell cycle transition. This Homo sapiens (Human) protein is BMP/retinoic acid-inducible neural-specific protein 2 (BRINP2).